A 349-amino-acid polypeptide reads, in one-letter code: MNRYKDAGVDVEAGYDLVKRIKKDIAATSRPETSGTIGSFGGMFDLEKLGYQHPVLVSGTDGVGTKLMIAQEMGINDTIGIDCVAMCVNDVLAQGAEPLFFLDYIATGHNDPAKLAQVVHGVAEGCRQSGSALIGGETAEMPDMYPKNEYDLAGFSTGIANKEDILTQDLAKEGDILIGLPSSGVHSNGFSLIRQVLFKDHHLKVTDRPEALEGKSIGEILLTPTKIYVQAVLSLVKRHLLHGIAHITGGGLIENLPRTYNDDLQAEVNLGAWPVQAIFRYLQNKGQLKEQDCLNTFNMGIGLVLLVPKANVLQVKEQLKQKNEQYYEIGKLRKRPIGEKKIVFNGSFK.

Belongs to the AIR synthase family.

Its subcellular location is the cytoplasm. The catalysed reaction is 2-formamido-N(1)-(5-O-phospho-beta-D-ribosyl)acetamidine + ATP = 5-amino-1-(5-phospho-beta-D-ribosyl)imidazole + ADP + phosphate + H(+). It participates in purine metabolism; IMP biosynthesis via de novo pathway; 5-amino-1-(5-phospho-D-ribosyl)imidazole from N(2)-formyl-N(1)-(5-phospho-D-ribosyl)glycinamide: step 2/2. The polypeptide is Phosphoribosylformylglycinamidine cyclo-ligase (Lactobacillus helveticus (strain DPC 4571)).